We begin with the raw amino-acid sequence, 303 residues long: Protease HtpX homolog (303 aa).

2 helical membrane passes run 4–24 and 38–58; these read VVLF…TARI and MGML…ISLL. Position 144 (His144) interacts with Zn(2+). Residue Glu145 is part of the active site. His148 serves as a coordination point for Zn(2+). A run of 2 helical transmembrane segments spans residues 152–172 and 199–219; these read GDMV…IFLS and ISSI…VMYF. A Zn(2+)-binding site is contributed by Glu224.

It belongs to the peptidase M48B family. It depends on Zn(2+) as a cofactor.

Its subcellular location is the cell inner membrane. The chain is Protease HtpX homolog from Chlorobium phaeobacteroides (strain BS1).